A 124-amino-acid polypeptide reads, in one-letter code: Small ribosomal subunit protein uS13 (124 aa).

The tract at residues 94-124 (GLPLRGQRTKNNSRTRKGKRKTVANKKKATK) is disordered. A compositionally biased stretch (basic residues) spans 100–124 (QRTKNNSRTRKGKRKTVANKKKATK).

Belongs to the universal ribosomal protein uS13 family. Part of the 30S ribosomal subunit. Forms a loose heterodimer with protein S19. Forms two bridges to the 50S subunit in the 70S ribosome.

In terms of biological role, located at the top of the head of the 30S subunit, it contacts several helices of the 16S rRNA. In the 70S ribosome it contacts the 23S rRNA (bridge B1a) and protein L5 of the 50S subunit (bridge B1b), connecting the 2 subunits; these bridges are implicated in subunit movement. Contacts the tRNAs in the A and P-sites. The polypeptide is Small ribosomal subunit protein uS13 (Flavobacterium psychrophilum (strain ATCC 49511 / DSM 21280 / CIP 103535 / JIP02/86)).